A 341-amino-acid chain; its full sequence is NADH-quinone oxidoreductase subunit H 1 (341 aa).

The next 8 membrane-spanning stretches (helical) occupy residues 13-33, 82-102, 115-135, 161-181, 190-210, 248-268, 277-297, and 317-337; these read LVVI…IAYI, GVFL…WAVI, VGVL…IMAG, IGFV…TAIV, LLGW…VSAL, YVAI…GWLP, WVPG…LFAM, and VFLP…QFAG.

Belongs to the complex I subunit 1 family. As to quaternary structure, NDH-1 is composed of 14 different subunits. Subunits NuoA, H, J, K, L, M, N constitute the membrane sector of the complex.

The protein localises to the cell inner membrane. The enzyme catalyses a quinone + NADH + 5 H(+)(in) = a quinol + NAD(+) + 4 H(+)(out). In terms of biological role, NDH-1 shuttles electrons from NADH, via FMN and iron-sulfur (Fe-S) centers, to quinones in the respiratory chain. The immediate electron acceptor for the enzyme in this species is believed to be ubiquinone. Couples the redox reaction to proton translocation (for every two electrons transferred, four hydrogen ions are translocated across the cytoplasmic membrane), and thus conserves the redox energy in a proton gradient. This subunit may bind ubiquinone. In Rhodopseudomonas palustris (strain BisB18), this protein is NADH-quinone oxidoreductase subunit H 1.